A 353-amino-acid chain; its full sequence is Thrombopoietin (353 aa).

The first 21 residues, Met-1–Ser-21, serve as a signal peptide directing secretion. Ser-22 carries O-linked (GalNAc...) serine glycosylation. Disulfide bonds link Cys-28-Cys-172 and Cys-50-Cys-106. O-linked (GalNAc...) threonine glycans are attached at residues Thr-58, Thr-131, Thr-179, and Thr-180. Ser-184 carries an O-linked (GalNAc...) serine glycan. Asn-197 and Asn-206 each carry an N-linked (GlcNAc...) (complex) asparagine glycan. O-linked (GalNAc...) threonine glycosylation is present at Thr-213. N-linked (GlcNAc...) (complex) asparagine glycosylation is found at Asn-234 and Asn-255. The disordered stretch occupies residues Thr-257–Gly-353. Residue Ser-265 is glycosylated (O-linked (GalNAc...) serine). The segment covering Ser-275–Tyr-304 has biased composition (polar residues). Over residues Leu-324–Thr-335 the composition is skewed to pro residues. N-linked (GlcNAc...) asparagine glycans are attached at residues Asn-340 and Asn-348. The segment covering Tyr-343–Gly-353 has biased composition (polar residues).

The protein belongs to the EPO/TPO family. In terms of assembly, interacts with MPL/TPOR.

It is found in the secreted. Its function is as follows. Lineage-specific cytokine affecting the proliferation and maturation of megakaryocytes from their committed progenitor cells. It acts at a late stage of megakaryocyte development. It may be the major physiological regulator of circulating platelets. This chain is Thrombopoietin (THPO), found in Homo sapiens (Human).